The primary structure comprises 291 residues: Aspartate carbamoyltransferase catalytic subunit (291 aa).

Carbamoyl phosphate is bound by residues Arg49 and Thr50. Lys77 contributes to the L-aspartate binding site. Carbamoyl phosphate contacts are provided by Arg99, His127, and Gln130. Arg160 and Arg210 together coordinate L-aspartate. Gly249 and Pro250 together coordinate carbamoyl phosphate.

This sequence belongs to the aspartate/ornithine carbamoyltransferase superfamily. ATCase family. In terms of assembly, heterododecamer (2C3:3R2) of six catalytic PyrB chains organized as two trimers (C3), and six regulatory PyrI chains organized as three dimers (R2).

It catalyses the reaction carbamoyl phosphate + L-aspartate = N-carbamoyl-L-aspartate + phosphate + H(+). Its pathway is pyrimidine metabolism; UMP biosynthesis via de novo pathway; (S)-dihydroorotate from bicarbonate: step 2/3. Functionally, catalyzes the condensation of carbamoyl phosphate and aspartate to form carbamoyl aspartate and inorganic phosphate, the committed step in the de novo pyrimidine nucleotide biosynthesis pathway. This Sulfurimonas denitrificans (strain ATCC 33889 / DSM 1251) (Thiomicrospira denitrificans (strain ATCC 33889 / DSM 1251)) protein is Aspartate carbamoyltransferase catalytic subunit.